The primary structure comprises 136 residues: Small ribosomal subunit protein uS19 (136 aa).

Positions R114–K136 are disordered.

This sequence belongs to the universal ribosomal protein uS19 family.

Protein S19 forms a complex with S13 that binds strongly to the 16S ribosomal RNA. This Methanosarcina acetivorans (strain ATCC 35395 / DSM 2834 / JCM 12185 / C2A) protein is Small ribosomal subunit protein uS19.